Consider the following 398-residue polypeptide: Cholinephosphotransferase 1 (398 aa).

An N-acetylalanine modification is found at A2. At 2-62 the chain is on the cytoplasmic side; sequence AAGAGARPAP…LLQWIPLWIA (61 aa). A helical transmembrane segment spans residues 63–83; it reads PNTITLFGLAINLFTTLVLIF. N64 serves as a coordination point for CDP-choline. Residues 84 to 93 are Lumenal-facing; sequence YCPTVTEEAP. Residues 94 to 118 traverse the membrane as a helical segment; it reads YWTYLLCALGLFIYQSLDAIDGKQA. Residues D111 and D114 each coordinate Mg(2+). A CDP-choline-binding site is contributed by R119. Residues 119-125 are Cytoplasmic-facing; it reads RRTNSCS. The chain crosses the membrane as a helical span at residues 126–150; sequence PLGELFDHGCDSLSTVFMAIGASIA. D132 serves as a coordination point for Mg(2+). Catalysis depends on H133, which acts as the Proton acceptor. D136 is a Mg(2+) binding site. At 151–160 the chain is on the lumenal side; the sequence is VRLGTHPDWL. Residues 161–179 traverse the membrane as a helical segment; the sequence is FFCSFVGMFMFYCAHWQTY. The Cytoplasmic segment spans residues 180–190; it reads VSGVLRFGRVD. A helical transmembrane segment spans residues 191 to 207; the sequence is VTEIQVALVIVFLLSTF. The Lumenal segment spans residues 208 to 222; sequence GGAMMWDYTIPILEI. The chain crosses the membrane as a helical span at residues 223-248; the sequence is KLKILPVLGVVGGLIFSCSNYFHVIL. Over 249 to 265 the chain is Cytoplasmic; that stretch reads HGGVGKNGSTIAGTSVL. Residues 266-281 form a helical membrane-spanning segment; that stretch reads SPGLHIGLIIILAIMI. Residues 282–293 lie on the Lumenal side of the membrane; the sequence is YKKSATNVFEKH. The chain crosses the membrane as a helical span at residues 294 to 316; it reads PCLYTLMFGCVFAKVAQKLVIAH. Over 317 to 329 the chain is Cytoplasmic; that stretch reads MTKSELYLQDTVF. A helical membrane pass occupies residues 330–339; the sequence is IGPGLLFLDQ. Residues 340-346 are Lumenal-facing; that stretch reads YFNNFID. The helical transmembrane segment at 347-376 threads the bilayer; the sequence is EYVVLWIAMVITSFDMMIYFSSLCLQISRH. Topologically, residues 377-398 are cytoplasmic; that stretch reads LHLSIFKTSYQQAPEQVHKHID.

The protein belongs to the CDP-alcohol phosphatidyltransferase class-I family. Requires Mg(2+) as cofactor. It depends on Mn(2+) as a cofactor.

The protein localises to the golgi apparatus membrane. The catalysed reaction is CDP-choline + a 1,2-diacyl-sn-glycerol = a 1,2-diacyl-sn-glycero-3-phosphocholine + CMP + H(+). It carries out the reaction 1-octadecanoyl-2-(5Z,8Z,11Z,14Z-eicosatetraenoyl)-sn-glycerol + CDP-choline = 1-octadecanoyl-2-(5Z,8Z,11Z,14Z-eicosatetraenoyl)-sn-glycero-3-phosphocholine + CMP + H(+). It catalyses the reaction 1-hexadecanoyl-2-(9Z-octadecenoyl)-sn-glycerol + CDP-choline = 1-hexadecanoyl-2-(9Z-octadecenoyl)-sn-glycero-3-phosphocholine + CMP + H(+). The enzyme catalyses 1-hexadecanoyl-2-(4Z,7Z,10Z,13Z,16Z,19Z-docosahexaenoyl)-sn-glycerol + CDP-choline = 1-hexadecanoyl-2-(4Z,7Z,10Z,13Z,16Z,19Z-docosahexaenoyl)-sn-glycero-3-phosphocholine + CMP + H(+). The catalysed reaction is 1,2-dioctanoyl-sn-glycerol + CDP-choline = 1,2-dioctanoyl-sn-glycero-3-phosphocholine + CMP + H(+). Its pathway is phospholipid metabolism; phosphatidylcholine biosynthesis; phosphatidylcholine from phosphocholine: step 2/2. Functionally, catalyzes the final step of de novo phosphatidylcholine (PC) synthesis, i.e. the transfer of choline phosphate from CDP-choline to the free hydroxyl of a diacylglycerol (DAG), producing a PC. It thereby plays a central role in the formation and maintenance of vesicular membranes. The polypeptide is Cholinephosphotransferase 1 (Rattus norvegicus (Rat)).